We begin with the raw amino-acid sequence, 379 residues long: Putative zinc metalloprotease BMEI0829 (379 aa).

Zn(2+) is bound at residue His-33. Glu-34 is a catalytic residue. His-37 lines the Zn(2+) pocket. 4 helical membrane passes run 39–61 (LVARWCGIGAQAFSIGFGPELLG), 122–144 (VFAGPAFNIILTIAIFSVFFALY), 305–327 (FDWLIQLMAMLSIGIGLLNLFPL), and 355–377 (IFYRIGFLLVMGFMGFVLFNDLF). Positions 133–208 (TIAIFSVFFA…LNFTVERDGK (76 aa)) constitute a PDZ domain.

This sequence belongs to the peptidase M50B family. Zn(2+) serves as cofactor.

The protein localises to the cell inner membrane. The polypeptide is Putative zinc metalloprotease BMEI0829 (Brucella melitensis biotype 1 (strain ATCC 23456 / CCUG 17765 / NCTC 10094 / 16M)).